The following is a 766-amino-acid chain: Protein sak1 (766 aa).

Positions 101-176 (GICWLKRACE…YHYCGIKLRG (76 aa)) form a DNA-binding region, RFX-type winged-helix. 3 positions are modified to phosphoserine: serine 223, serine 224, and serine 227. Disordered stretches follow at residues 271–308 (PQAHPLPSHLSQSNVPPQLSHSSVPSPAPPRSVSQPTY) and 708–731 (LQEHRQSQQHFQQDIEALQSQQQQ). The span at 279-289 (HLSQSNVPPQL) shows a compositional bias: polar residues. 2 stretches are compositionally biased toward low complexity: residues 290 to 308 (SHSSVPSPAPPRSVSQPTY) and 715 to 731 (QQHFQQDIEALQSQQQQ).

This sequence belongs to the RFX family.

It is found in the nucleus. Its function is as follows. Positively regulates cyclic AMP-dependent protein kinase-mediated exit from the mitotic cell cycle. The protein is Protein sak1 (sak1) of Schizosaccharomyces pombe (strain 972 / ATCC 24843) (Fission yeast).